A 631-amino-acid chain; its full sequence is Nucleoside triphosphatase I (631 aa).

The Helicase ATP-binding domain occupies 42-204 (FLGLDSMHSL…TMLVNLLRPG (163 aa)). An ATP-binding site is contributed by 55–62 (HETGVGKT). The DEXH box signature appears at 141 to 144 (DECH). The 166-residue stretch at 367–532 (KFIDVCLGIL…EFVQLFRVFK (166 aa)) folds into the Helicase C-terminal domain. A binding to the cap-specific mRNA (nucleoside-2'-O-)-methyltransferase region spans residues 457–524 (DIFILDMTWN…EIIQSKSKEF (68 aa)).

Belongs to the helicase family. NPH I subfamily. Monomer. Interacts (via C-terminus) with RAP94/OPG109 (via N-terminus). Interacts with the cap-specific mRNA (nucleoside-2'-O-)-methyltransferase OPG102.

It localises to the virion. The enzyme catalyses a ribonucleoside 5'-triphosphate + H2O = a ribonucleoside 5'-diphosphate + phosphate + H(+). In terms of biological role, DNA-dependent ATPase that acts as a 5' to 3' translocase on single-stranded DNA and thereby plays a role in transcription termination of viral early genes. Uses forward translocation in concert with the viral RNA polymerase RAP94/OPG109 subunit and the capping enzyme/VTF to catalyze release of UUUUUNU-containing nascent RNA from the elongation complex. In addition, acts as a positive elongation factor to assist transcription through problematic sequences. This chain is Nucleoside triphosphatase I (OPG123), found in Variola virus (isolate Human/India/Ind3/1967) (VARV).